A 347-amino-acid polypeptide reads, in one-letter code: Haptoglobin (347 aa).

A signal peptide spans 1–18 (MRALGAVVTLLLWGQLFA). A Sushi domain is found at 31-88 (DSCPKPPEIANGYVEHLVRYRCRQFYRLRAEGDGVYTLNDEKQWMNTVAGEKLPECEA). Cystine bridges form between Cys-52/Cys-86, Cys-90/Cys-207, Cys-250/Cys-281, and Cys-292/Cys-322. A Peptidase S1 domain is found at 103–345 (IIGGSMDAKG…LKDWVQETMA (243 aa)). Residues Asn-148, Asn-182, and Asn-264 are each glycosylated (N-linked (GlcNAc...) asparagine). Residues 259 to 264 (VPEKKN) form an interaction with CD163 region.

This sequence belongs to the peptidase S1 family. In terms of assembly, tetramer of two alpha and two beta chains; disulfide-linked. The hemoglobin/haptoglobin complex is composed of a haptoglobin dimer bound to two hemoglobin alpha-beta dimers. Interacts with CD163. Interacts with ERGIC3. As to expression, expressed by the liver and secreted in plasma.

The protein localises to the secreted. As a result of hemolysis, hemoglobin is found to accumulate in the kidney and is secreted in the urine. Haptoglobin captures, and combines with free plasma hemoglobin to allow hepatic recycling of heme iron and to prevent kidney damage. Haptoglobin also acts as an antioxidant, has antibacterial activity and plays a role in modulating many aspects of the acute phase response. Hemoglobin/haptoglobin complexes are rapidly cleared by the macrophage CD163 scavenger receptor expressed on the surface of liver Kupfer cells through an endocytic lysosomal degradation pathway. In Mus caroli (Ryukyu mouse), this protein is Haptoglobin (Hp).